A 120-amino-acid chain; its full sequence is Large ribosomal subunit protein eL18 (120 aa).

It belongs to the eukaryotic ribosomal protein eL18 family. Part of the 50S ribosomal subunit.

The protein is Large ribosomal subunit protein eL18 of Pyrococcus furiosus (strain ATCC 43587 / DSM 3638 / JCM 8422 / Vc1).